Consider the following 572-residue polypeptide: Proline--tRNA ligase (572 aa).

The protein belongs to the class-II aminoacyl-tRNA synthetase family. ProS type 1 subfamily. In terms of assembly, homodimer.

The protein localises to the cytoplasm. It catalyses the reaction tRNA(Pro) + L-proline + ATP = L-prolyl-tRNA(Pro) + AMP + diphosphate. Functionally, catalyzes the attachment of proline to tRNA(Pro) in a two-step reaction: proline is first activated by ATP to form Pro-AMP and then transferred to the acceptor end of tRNA(Pro). As ProRS can inadvertently accommodate and process non-cognate amino acids such as alanine and cysteine, to avoid such errors it has two additional distinct editing activities against alanine. One activity is designated as 'pretransfer' editing and involves the tRNA(Pro)-independent hydrolysis of activated Ala-AMP. The other activity is designated 'posttransfer' editing and involves deacylation of mischarged Ala-tRNA(Pro). The misacylated Cys-tRNA(Pro) is not edited by ProRS. This chain is Proline--tRNA ligase, found in Yersinia pseudotuberculosis serotype O:1b (strain IP 31758).